The sequence spans 25 residues: Caerin-1.3 (25 aa).

L25 bears the Leucine amide mark.

Expressed by the skin parotoid and/or rostral glands.

The protein localises to the secreted. Its function is as follows. Antibacterial peptide, that adopts an alpha helical conformation which can disrupt bacterial membranes. Each caerin displays a different antimicrobial specificity. In Ranoidea caerulea (Green tree frog), this protein is Caerin-1.3.